The chain runs to 182 residues: ADP-ribosylation factor 1 (182 aa).

Gly-2 carries N-myristoyl glycine lipidation. GTP contacts are provided by residues 24–31, 67–71, and 126–129; these read GLDNAGKT, DLGGQ, and NKQD.

The protein belongs to the small GTPase superfamily. Arf family.

Its subcellular location is the golgi apparatus. The enzyme catalyses GTP + H2O = GDP + phosphate + H(+). GTP-binding protein involved in protein trafficking; may modulate vesicle budding and uncoating within the Golgi apparatus. The sequence is that of ADP-ribosylation factor 1 (ARF1) from Brassica rapa subsp. pekinensis (Chinese cabbage).